The primary structure comprises 139 residues: 6,7-dimethyl-8-ribityllumazine synthase (139 aa).

Residues Phe13, 45-47, and 69-71 each bind 5-amino-6-(D-ribitylamino)uracil; these read VFD and AVI. A (2S)-2-hydroxy-3-oxobutyl phosphate-binding site is contributed by 74-75; it reads AT. The active-site Proton donor is His77. Leu102 contacts 5-amino-6-(D-ribitylamino)uracil. Arg117 provides a ligand contact to (2S)-2-hydroxy-3-oxobutyl phosphate.

Belongs to the DMRL synthase family.

The catalysed reaction is (2S)-2-hydroxy-3-oxobutyl phosphate + 5-amino-6-(D-ribitylamino)uracil = 6,7-dimethyl-8-(1-D-ribityl)lumazine + phosphate + 2 H2O + H(+). The protein operates within cofactor biosynthesis; riboflavin biosynthesis; riboflavin from 2-hydroxy-3-oxobutyl phosphate and 5-amino-6-(D-ribitylamino)uracil: step 1/2. Functionally, catalyzes the formation of 6,7-dimethyl-8-ribityllumazine by condensation of 5-amino-6-(D-ribitylamino)uracil with 3,4-dihydroxy-2-butanone 4-phosphate. This is the penultimate step in the biosynthesis of riboflavin. The polypeptide is 6,7-dimethyl-8-ribityllumazine synthase (Methanothermobacter thermautotrophicus (strain ATCC 29096 / DSM 1053 / JCM 10044 / NBRC 100330 / Delta H) (Methanobacterium thermoautotrophicum)).